An 87-amino-acid chain; its full sequence is Small ribosomal subunit protein uS19m (87 aa).

It belongs to the universal ribosomal protein uS19 family.

The protein resides in the mitochondrion. This Dictyostelium citrinum (Slime mold) protein is Small ribosomal subunit protein uS19m (mrps19).